The primary structure comprises 58 residues: TTACCNFCPCTRSIPPQCRCTDIGETCHSACKTCLCTKSIPPQCHCADITNFCYPKCN.

Disulfide bonds link Cys4-Cys57, Cys5-Cys20, Cys8-Cys53, Cys10-Cys18, Cys27-Cys34, Cys31-Cys46, and Cys36-Cys44.

The protein belongs to the Bowman-Birk serine protease inhibitor family.

This Medicago sativa (Alfalfa) protein is Bowman-Birk type wound-induced trypsin inhibitor.